The sequence spans 832 residues: Dolichyl-phosphate-mannose--protein mannosyltransferase 6 (832 aa).

The interval 1–44 (MATGYSTGVSPFDLDENNHNDSIHHRHQNHHSQSHDSSGERDDT) is disordered. Residues asparagine 20 and asparagine 59 are each glycosylated (N-linked (GlcNAc...) asparagine). A run of 7 helical transmembrane segments spans residues 135 to 155 (FYFD…GYLA), 175 to 194 (YVFM…PLAY), 206 to 227 (TCWL…SKFI), 232 to 252 (MLLF…TLAI), 266 to 286 (LEIK…SVKW), 293 to 311 (ALVG…YQTF), and 327 to 347 (LIHW…IYVA). A glycan (N-linked (GlcNAc...) asparagine) is linked at asparagine 357. An MIR 1 domain is found at 383-437 (PRSVAFGSLVTIRSQGLSPNLIHSHPHNYPQGSQEQQVTTYGFKDDNNEFLFEFG). Asparagine 453 is a glycosylation site (N-linked (GlcNAc...) asparagine). 2 consecutive MIR domains span residues 466–522 (HVII…IEIQ) and 537–595 (PSEI…IEKH). 4 consecutive transmembrane segments (helical) span residues 676–696 (ITWI…VVGI), 723–743 (LLAA…VPFI), 755–775 (VPAL…ILNL), and 787–807 (IFKV…FWYF).

The protein belongs to the glycosyltransferase 39 family.

It localises to the endoplasmic reticulum membrane. It catalyses the reaction a di-trans,poly-cis-dolichyl beta-D-mannosyl phosphate + L-seryl-[protein] = 3-O-(alpha-D-mannosyl)-L-seryl-[protein] + a di-trans,poly-cis-dolichyl phosphate + H(+). The catalysed reaction is a di-trans,poly-cis-dolichyl beta-D-mannosyl phosphate + L-threonyl-[protein] = 3-O-(alpha-D-mannosyl)-L-threonyl-[protein] + a di-trans,poly-cis-dolichyl phosphate + H(+). It participates in protein modification; protein glycosylation. Its function is as follows. Protein mannosyltransferase (PMT) involved in hyphal morphogenesis and drug sensitivity. Transfers mannose from Dol-P-mannose to Ser or Thr residues on proteins. PMT1, PMT2 and PMT4 account for most of the protein-O-glycosylation activity, while PMT5 and PMT6 may specifically modulate a much narrower spectrum of target proteins. Required for biofilm formation and virulence. The chain is Dolichyl-phosphate-mannose--protein mannosyltransferase 6 (PMT6) from Candida albicans (strain SC5314 / ATCC MYA-2876) (Yeast).